We begin with the raw amino-acid sequence, 442 residues long: 3-isopropylmalate dehydratase large subunit (442 aa).

3 residues coordinate [4Fe-4S] cluster: X347, C407, and C410.

This sequence belongs to the aconitase/IPM isomerase family. LeuC type 1 subfamily. Heterodimer of LeuC and LeuD. [4Fe-4S] cluster serves as cofactor.

It catalyses the reaction (2R,3S)-3-isopropylmalate = (2S)-2-isopropylmalate. Its pathway is amino-acid biosynthesis; L-leucine biosynthesis; L-leucine from 3-methyl-2-oxobutanoate: step 2/4. Its function is as follows. Catalyzes the isomerization between 2-isopropylmalate and 3-isopropylmalate, via the formation of 2-isopropylmaleate. The chain is 3-isopropylmalate dehydratase large subunit from Buchnera aphidicola subsp. Macrosiphoniella ludovicianae.